Here is a 425-residue protein sequence, read N- to C-terminus: Trigger factor (425 aa).

The PPIase FKBP-type domain occupies 158–231 (GDLVRISMEV…VQEVYRRTLP (74 aa)).

Belongs to the FKBP-type PPIase family. Tig subfamily.

The protein localises to the cytoplasm. The catalysed reaction is [protein]-peptidylproline (omega=180) = [protein]-peptidylproline (omega=0). Involved in protein export. Acts as a chaperone by maintaining the newly synthesized protein in an open conformation. Functions as a peptidyl-prolyl cis-trans isomerase. This Thermotoga neapolitana (strain ATCC 49049 / DSM 4359 / NBRC 107923 / NS-E) protein is Trigger factor.